We begin with the raw amino-acid sequence, 83 residues long: Antitoxin ChpS (83 aa).

The SpoVT-AbrB domain occupies 3-48; it reads ITIKRWGNSAGMVIPNIVMKELNLQPGQSVEAQVSNNQLILTPISR.

Belongs to the PemI family. In terms of assembly, interacts with ChpB, inhibiting its endoribonuclease activity.

In terms of biological role, antitoxin component of a type II toxin-antitoxin (TA) system. May be involved in the regulation of cell growth. It acts as a suppressor of the endoribonuclease (inhibitory function) of ChpB protein. Both ChpS and ChpB probably bind to the promoter region of the chpS-chpB operon to autoregulate their synthesis. The chain is Antitoxin ChpS (chpS) from Escherichia coli (strain K12).